We begin with the raw amino-acid sequence, 240 residues long: MPRAQLDKDPHDVAGMFDDVARRYDLTNDVLSLGMDRLWRRATLDALGARPGERVLDLAAGTGTSSADLADDGVDVVSCDFSTGMVAEGKRRRPDLAFVAGDATRLPFADGSFDAVTISFGLRNVSPAVAGLSEMLRVTRPGGRLVVAEFSTPPWAPFEALYGFYLQTFLTPLAKAVSSNPEAYDYLEESIRDWPDQLGVAALLHEAGWRGVGYRNLTGGIVALHRARKIATENTSAGRG.

S-adenosyl-L-methionine contacts are provided by residues threonine 62, aspartate 80, aspartate 102–alanine 103, and serine 119.

It belongs to the class I-like SAM-binding methyltransferase superfamily. MenG/UbiE family.

The enzyme catalyses a 2-demethylmenaquinol + S-adenosyl-L-methionine = a menaquinol + S-adenosyl-L-homocysteine + H(+). Its pathway is quinol/quinone metabolism; menaquinone biosynthesis; menaquinol from 1,4-dihydroxy-2-naphthoate: step 2/2. Methyltransferase required for the conversion of demethylmenaquinol (DMKH2) to menaquinol (MKH2). The protein is Demethylmenaquinone methyltransferase of Beutenbergia cavernae (strain ATCC BAA-8 / DSM 12333 / CCUG 43141 / JCM 11478 / NBRC 16432 / NCIMB 13614 / HKI 0122).